The following is a 445-amino-acid chain: UDP-N-acetylmuramoylalanine--D-glutamate ligase (445 aa).

An ATP-binding site is contributed by 117 to 123 (GSNGKTT).

Belongs to the MurCDEF family.

It localises to the cytoplasm. It carries out the reaction UDP-N-acetyl-alpha-D-muramoyl-L-alanine + D-glutamate + ATP = UDP-N-acetyl-alpha-D-muramoyl-L-alanyl-D-glutamate + ADP + phosphate + H(+). The protein operates within cell wall biogenesis; peptidoglycan biosynthesis. Functionally, cell wall formation. Catalyzes the addition of glutamate to the nucleotide precursor UDP-N-acetylmuramoyl-L-alanine (UMA). This Neisseria meningitidis serogroup A / serotype 4A (strain DSM 15465 / Z2491) protein is UDP-N-acetylmuramoylalanine--D-glutamate ligase.